The sequence spans 507 residues: Maturase K (507 aa).

It belongs to the intron maturase 2 family. MatK subfamily.

The protein localises to the plastid. The protein resides in the chloroplast. Its function is as follows. Usually encoded in the trnK tRNA gene intron. Probably assists in splicing its own and other chloroplast group II introns. The chain is Maturase K from Robinia pseudoacacia (Black locust).